The chain runs to 307 residues: Transcription initiation factor IIB (307 aa).

The TFIIB-type zinc finger occupies 11 to 42 (FTEECPACGSAEIVFDEERGEYVCANCGLVTE). Zn(2+) contacts are provided by Cys15, Cys18, Cys34, and Cys37. Residues 48-69 (PGPEWRHFNPDQRQRRSRTGEP) form a disordered region. Residues 50-69 (PEWRHFNPDQRQRRSRTGEP) show a composition bias toward basic and acidic residues. 2 tandem repeats follow at residues 123–207 (LELE…QRRL) and 218–299 (DHLP…EICE).

Belongs to the TFIIB family.

Its function is as follows. Stabilizes TBP binding to an archaeal box-A promoter. Also responsible for recruiting RNA polymerase II to the pre-initiation complex (DNA-TBP-TFIIB). This is Transcription initiation factor IIB from Methanopyrus kandleri (strain AV19 / DSM 6324 / JCM 9639 / NBRC 100938).